The following is a 503-amino-acid chain: Sarpagan bridge enzyme 1 (503 aa).

A helical; Signal-anchor for type II membrane protein transmembrane segment spans residues 3 to 23 (ISVTTSIALATIVFFLYKLAT). Residue Cys442 coordinates heme.

This sequence belongs to the cytochrome P450 family. Heme is required as a cofactor. In terms of tissue distribution, highly expressed in roots. Expressed at low levels in leaves, stems and flowers.

It is found in the endoplasmic reticulum membrane. The catalysed reaction is (19E)-geissoschizine + reduced [NADPH--hemoprotein reductase] + O2 = polyneuridine aldehyde + oxidized [NADPH--hemoprotein reductase] + 2 H2O + H(+). It catalyses the reaction tetrahydroalstonine + A + reduced [NADPH--hemoprotein reductase] + O2 = alstonine + AH2 + oxidized [NADPH--hemoprotein reductase] + 2 H2O + H(+). The enzyme catalyses ajmalicine + A + reduced [NADPH--hemoprotein reductase] + O2 = serpentine + AH2 + oxidized [NADPH--hemoprotein reductase] + 2 H2O + H(+). It participates in alkaloid biosynthesis; ajmaline biosynthesis. Monooxygenase involved in the biosynthesis of ajmaline-type monoterpenoid indole alkaloids (MIAs) natural products, important plant-derived pharmaceuticals used in the therapy of heart disorders. Converts by cyclization the strictosidine-derived geissoschizine to the sarpagan alkaloid polyneuridine aldehyde, precursor of vomilenine, an intermediate chemical in the biosynthesis of ajmaline. Converts by aromatization the tetrahydro-beta-carboline alkaloids tetrahydroalstonine and ajmalicine to the corresponding beta-carboline alkaloids alstonine and serpentine, respectively. This chain is Sarpagan bridge enzyme 1, found in Rauvolfia serpentina (Serpentine wood).